Consider the following 319-residue polypeptide: Malate dehydrogenase (319 aa).

Residues 10-15 (GAGNIG) and Asp-34 contribute to the NAD(+) site. Arg-83 and Arg-89 together coordinate substrate. NAD(+) is bound by residues Asn-96 and 119–121 (ITN). Positions 121 and 152 each coordinate substrate. His-176 functions as the Proton acceptor in the catalytic mechanism.

This sequence belongs to the LDH/MDH superfamily. MDH type 3 family.

It carries out the reaction (S)-malate + NAD(+) = oxaloacetate + NADH + H(+). Its function is as follows. Catalyzes the reversible oxidation of malate to oxaloacetate. This chain is Malate dehydrogenase, found in Francisella philomiragia subsp. philomiragia (strain ATCC 25017 / CCUG 19701 / FSC 153 / O#319-036).